The chain runs to 38 residues: Photosystem II reaction center protein L (38 aa).

A helical transmembrane segment spans residues Ser-17–Phe-37.

Belongs to the PsbL family. As to quaternary structure, PSII is composed of 1 copy each of membrane proteins PsbA, PsbB, PsbC, PsbD, PsbE, PsbF, PsbH, PsbI, PsbJ, PsbK, PsbL, PsbM, PsbT, PsbX, PsbY, PsbZ, Psb30/Ycf12, at least 3 peripheral proteins of the oxygen-evolving complex and a large number of cofactors. It forms dimeric complexes.

It is found in the plastid. Its subcellular location is the chloroplast thylakoid membrane. In terms of biological role, one of the components of the core complex of photosystem II (PSII). PSII is a light-driven water:plastoquinone oxidoreductase that uses light energy to abstract electrons from H(2)O, generating O(2) and a proton gradient subsequently used for ATP formation. It consists of a core antenna complex that captures photons, and an electron transfer chain that converts photonic excitation into a charge separation. This subunit is found at the monomer-monomer interface and is required for correct PSII assembly and/or dimerization. In Pinus thunbergii (Japanese black pine), this protein is Photosystem II reaction center protein L.